The sequence spans 346 residues: Protein RecA (346 aa).

An ATP-binding site is contributed by 66–73 (GPESSGKT).

The protein belongs to the RecA family.

It localises to the cytoplasm. In terms of biological role, can catalyze the hydrolysis of ATP in the presence of single-stranded DNA, the ATP-dependent uptake of single-stranded DNA by duplex DNA, and the ATP-dependent hybridization of homologous single-stranded DNAs. It interacts with LexA causing its activation and leading to its autocatalytic cleavage. The polypeptide is Protein RecA (Aromatoleum aromaticum (strain DSM 19018 / LMG 30748 / EbN1) (Azoarcus sp. (strain EbN1))).